The chain runs to 185 residues: Elongation factor P (185 aa).

It belongs to the elongation factor P family.

It is found in the cytoplasm. Its pathway is protein biosynthesis; polypeptide chain elongation. Its function is as follows. Involved in peptide bond synthesis. Stimulates efficient translation and peptide-bond synthesis on native or reconstituted 70S ribosomes in vitro. Probably functions indirectly by altering the affinity of the ribosome for aminoacyl-tRNA, thus increasing their reactivity as acceptors for peptidyl transferase. The polypeptide is Elongation factor P (efp) (Thermotoga maritima (strain ATCC 43589 / DSM 3109 / JCM 10099 / NBRC 100826 / MSB8)).